The following is a 326-amino-acid chain: Tagatose 1,6-diphosphate aldolase (326 aa).

The protein belongs to the aldolase LacD family.

The catalysed reaction is D-tagatofuranose 1,6-bisphosphate = D-glyceraldehyde 3-phosphate + dihydroxyacetone phosphate. It participates in carbohydrate metabolism; D-tagatose 6-phosphate degradation; D-glyceraldehyde 3-phosphate and glycerone phosphate from D-tagatose 6-phosphate: step 2/2. The polypeptide is Tagatose 1,6-diphosphate aldolase (Streptococcus pneumoniae (strain ATCC BAA-255 / R6)).